A 680-amino-acid chain; its full sequence is ABC transporter B family member 24, mitochondrial (680 aa).

Residues 1-75 constitute a mitochondrion transit peptide; sequence MMRVSQLQLC…MFFSTSTSAP (75 aa). An ABC transmembrane type-1 domain is found at 108-402; it reads VISAFACLVG…LGVVYSDTVQ (295 aa). The next 6 helical transmembrane spans lie at 109-129, 145-165, 232-252, 255-275, 340-360, and 376-396; these read ISAF…PFLF, NPYL…YGIA, AMVF…CILA, FGAV…AFTL, FALL…TAMV, and LVMV…LGVV. Residues 439-673 enclose the ABC transporter domain; sequence ISFENVHFSY…SGRYAKLWTQ (235 aa). ATP contacts are provided by residues tyrosine 448 and 472–483; that span reads GSSGSGKSTILR.

This sequence belongs to the ABC transporter superfamily. ABCB family. Heavy Metal importer (TC 3.A.1.210) subfamily. In terms of assembly, homodimer. In terms of tissue distribution, mostly expressed at low levels in roots and flowers.

It is found in the mitochondrion inner membrane. In terms of biological role, performs an essential function in the generation of cytoplasmic iron-sulfur proteins by mediating export of Fe/S cluster precursors synthesized by NFS1 and other mitochondrial proteins. Not involved in the export of cyclic pyranopterin monophosphate (cPMP) from mitochondria to the cytosol. This Arabidopsis thaliana (Mouse-ear cress) protein is ABC transporter B family member 24, mitochondrial (ABCB24).